The chain runs to 357 residues: Thiamine thiazole synthase 1, chloroplastic (357 aa).

The N-terminal 51 residues, 1–51, are a transit peptide targeting the chloroplast; sequence MSISAAGVATGLGANVELKSNVGSSSSSVAGVRLFTSRKAQLRRCAAPATS. Substrate contacts are provided by residues Ala-103, 123-124, Gly-131, and Ala-196; that span reads EQ. Position 225 is a 2,3-didehydroalanine (Cys) (Cys-225). Substrate is bound by residues Asp-227, His-242, Met-294, and 304-306; that span reads RMG.

This sequence belongs to the THI4 family. In terms of assembly, homooctamer. Fe cation serves as cofactor. During the catalytic reaction, a sulfide is transferred from Cys-225 to a reaction intermediate, generating a dehydroalanine residue.

It localises to the plastid. It is found in the chloroplast. It carries out the reaction [ADP-thiazole synthase]-L-cysteine + glycine + NAD(+) = [ADP-thiazole synthase]-dehydroalanine + ADP-5-ethyl-4-methylthiazole-2-carboxylate + nicotinamide + 3 H2O + 2 H(+). Involved in biosynthesis of the thiamine precursor thiazole. Catalyzes the conversion of NAD and glycine to adenosine diphosphate 5-(2-hydroxyethyl)-4-methylthiazole-2-carboxylic acid (ADT), an adenylated thiazole intermediate. The reaction includes an iron-dependent sulfide transfer from a conserved cysteine residue of the protein to a thiazole intermediate. The enzyme can only undergo a single turnover, which suggests it is a suicide enzyme. May have additional roles in adaptation to various stress conditions and in DNA damage tolerance. In Physcomitrium patens (Spreading-leaved earth moss), this protein is Thiamine thiazole synthase 1, chloroplastic.